Reading from the N-terminus, the 555-residue chain is Formate--tetrahydrofolate ligase (555 aa).

65 to 72 provides a ligand contact to ATP; the sequence is TPAGEGKS.

Belongs to the formate--tetrahydrofolate ligase family.

The catalysed reaction is (6S)-5,6,7,8-tetrahydrofolate + formate + ATP = (6R)-10-formyltetrahydrofolate + ADP + phosphate. It functions in the pathway one-carbon metabolism; tetrahydrofolate interconversion. The protein is Formate--tetrahydrofolate ligase of Staphylococcus aureus (strain NCTC 8325 / PS 47).